The chain runs to 322 residues: Aldo-keto reductase family 1 member C13 (322 aa).

Residues Gly-20 to Tyr-24 and Asp-50 each bind NAD(+). The Proton donor role is filled by Tyr-55. His-117 is a binding site for substrate. Residues Ser-166–Asn-167, Gln-190, Phe-216–Tyr-224, and Gln-270–Asn-280 each bind NAD(+).

This sequence belongs to the aldo/keto reductase family. In terms of assembly, monomer. Post-translationally, the N-terminus is blocked.

It carries out the reaction morphine + NAD(+) = morphinone + NADH + H(+). The catalysed reaction is morphine + NADP(+) = morphinone + NADPH + H(+). With respect to regulation, strongly inhibited by sulfhydryl reagents and ketamine, but not by pyrazole, barbital and indomethacine. Functionally, catalyzes the dehydrogenation of morphine to morphinone. The enzyme also exhibits significant activity for a variety of cyclic and alicyclic alcohols. In addition to xenobiotics, the enzyme catalyzes the dehydrogenation of 17-beta-hydroxysteroids with much higher affinities than morphine. Uses both NAD and NADP, but the activity is much greater with NAD than with NADP. This is Aldo-keto reductase family 1 member C13 (AKR1C13) from Mesocricetus auratus (Golden hamster).